A 1096-amino-acid chain; its full sequence is Lysine-specific demethylase PHF2 (1096 aa).

Residues proline 5–threonine 56 form a PHD-type zinc finger. Residues threonine 193 and threonine 246 each contribute to the 2-oxoglutarate site. A JmjC domain is found at phenylalanine 197–arginine 353. 2 residues coordinate Fe cation: histidine 249 and aspartate 251. Tyrosine 259 and lysine 266 together coordinate 2-oxoglutarate. Tyrosine 321 provides a ligand contact to Fe cation. Threonine 323 contacts 2-oxoglutarate. The disordered stretch occupies residues threonine 448 to lysine 630. Serine 474 carries the post-translational modification Phosphoserine. The residue at position 479 (threonine 479) is a Phosphothreonine. A compositionally biased stretch (pro residues) spans serine 503 to proline 515. Phosphoserine is present on serine 536. Basic and acidic residues-rich tracts occupy residues leucine 545 to lysine 560 and aspartate 575 to lysine 630. Phosphoserine is present on residues serine 651, serine 677, and serine 701. Lysine 707 is covalently cross-linked (Glycyl lysine isopeptide (Lys-Gly) (interchain with G-Cter in SUMO2)). The residue at position 716 (lysine 716) is an N6-acetyllysine. 3 disordered regions span residues leucine 719–serine 755, tryptophan 811–leucine 841, and tyrosine 871–glutamine 1080. Residue tyrosine 724 is modified to Phosphotyrosine. Over residues lysine 725–serine 753 the composition is skewed to basic and acidic residues. Residues serine 726, serine 729, serine 730, and serine 734 each carry the phosphoserine modification. 3 positions are modified to phosphoserine: serine 873, serine 876, and serine 893. Residues arginine 910–threonine 919 show a composition bias toward basic and acidic residues. Positions asparagine 943–proline 953 are enriched in basic residues. Low complexity predominate over residues alanine 954 to serine 1010. Polar residues-rich tracts occupy residues glycine 1031 to arginine 1040 and arginine 1054 to alanine 1065. Serine 1057 is subject to Phosphoserine; by PKA.

This sequence belongs to the JHDM1 histone demethylase family. JHDM1D subfamily. As to quaternary structure, component of the PHF2-ARID5B complex, at least composed of PHF2 and ARID5B. Interacts with HNF4A and NR1H4. Interacts with RELA. Post-translationally, phosphorylated by PKA on specific serine residues, leading to the formation of an active lysine demethylase complex.

Its subcellular location is the nucleus. The protein localises to the nucleolus. It localises to the chromosome. It is found in the centromere. The protein resides in the kinetochore. The catalysed reaction is N(6),N(6)-dimethyl-L-lysyl(9)-[histone H3] + 2-oxoglutarate + O2 = N(6)-methyl-L-lysyl(9)-[histone H3] + formaldehyde + succinate + CO2. Its activity is regulated as follows. Enzymatically inactive by itself, and become active following phosphorylation by PKA. Functionally, lysine demethylase that demethylates both histones and non-histone proteins. Enzymatically inactive by itself, and becomes active following phosphorylation by PKA: forms a complex with ARID5B and mediates demethylation of methylated ARID5B. Demethylation of ARID5B leads to target the PHF2-ARID5B complex to target promoters, where PHF2 mediates demethylation of dimethylated 'Lys-9' of histone H3 (H3K9me2), followed by transcription activation of target genes. The PHF2-ARID5B complex acts as a coactivator of HNF4A in liver. PHF2 is recruited to trimethylated 'Lys-4' of histone H3 (H3K4me3) at rDNA promoters and promotes expression of rDNA. Involved in the activation of toll-like receptor 4 (TLR4)-target inflammatory genes in macrophages by catalyzing the demethylation of trimethylated histone H4 lysine 20 (H4K20me3) at the gene promoters. The chain is Lysine-specific demethylase PHF2 (Phf2) from Mus musculus (Mouse).